We begin with the raw amino-acid sequence, 427 residues long: Serine--tRNA ligase (427 aa).

L-serine is bound at residue 235-237 (TAE). ATP is bound by residues 266–268 (RRE) and valine 282. Residue glutamate 289 participates in L-serine binding. Residue 353 to 356 (EASS) coordinates ATP. Serine 389 is a binding site for L-serine.

It belongs to the class-II aminoacyl-tRNA synthetase family. Type-1 seryl-tRNA synthetase subfamily. As to quaternary structure, homodimer. The tRNA molecule binds across the dimer.

The protein resides in the cytoplasm. It carries out the reaction tRNA(Ser) + L-serine + ATP = L-seryl-tRNA(Ser) + AMP + diphosphate + H(+). The enzyme catalyses tRNA(Sec) + L-serine + ATP = L-seryl-tRNA(Sec) + AMP + diphosphate + H(+). The protein operates within aminoacyl-tRNA biosynthesis; selenocysteinyl-tRNA(Sec) biosynthesis; L-seryl-tRNA(Sec) from L-serine and tRNA(Sec): step 1/1. In terms of biological role, catalyzes the attachment of serine to tRNA(Ser). Is also able to aminoacylate tRNA(Sec) with serine, to form the misacylated tRNA L-seryl-tRNA(Sec), which will be further converted into selenocysteinyl-tRNA(Sec). The chain is Serine--tRNA ligase from Chlorobaculum parvum (strain DSM 263 / NCIMB 8327) (Chlorobium vibrioforme subsp. thiosulfatophilum).